The primary structure comprises 134 residues: Translation initiation factor 2 subunit beta (134 aa).

It belongs to the eIF-2-beta/eIF-5 family. Heterotrimer composed of an alpha, a beta and a gamma chain.

Its function is as follows. eIF-2 functions in the early steps of protein synthesis by forming a ternary complex with GTP and initiator tRNA. This is Translation initiation factor 2 subunit beta from Pyrobaculum aerophilum (strain ATCC 51768 / DSM 7523 / JCM 9630 / CIP 104966 / NBRC 100827 / IM2).